The following is a 444-amino-acid chain: Type VII secretion system protein EssB (444 aa).

Topologically, residues methionine 1–tryptophan 229 are cytoplasmic. The chain crosses the membrane as a helical span at residues valine 230–phenylalanine 250. Topologically, residues serine 251–lysine 444 are extracellular. A disordered region spans residues lysine 366–lysine 444. The span at serine 372–lysine 444 shows a compositional bias: basic and acidic residues. Residues leucine 387 to lysine 443 adopt a coiled-coil conformation.

This sequence belongs to the EssB family. May oligomerize and interact with other membrane components to form the Ess system. Interacts with EsaA.

It localises to the cell membrane. In terms of biological role, component of the type VII secretion system (Ess). Required for the secretion of EsxA and proper accumulation of EssB and EssD. The polypeptide is Type VII secretion system protein EssB (Staphylococcus aureus (strain USA300)).